We begin with the raw amino-acid sequence, 246 residues long: Ribonuclease PH (246 aa).

Residues arginine 95 and glycine 133–arginine 135 each bind phosphate.

It belongs to the RNase PH family. In terms of assembly, homohexameric ring arranged as a trimer of dimers.

The catalysed reaction is tRNA(n+1) + phosphate = tRNA(n) + a ribonucleoside 5'-diphosphate. Its function is as follows. Phosphorolytic 3'-5' exoribonuclease that plays an important role in tRNA 3'-end maturation. Removes nucleotide residues following the 3'-CCA terminus of tRNAs; can also add nucleotides to the ends of RNA molecules by using nucleoside diphosphates as substrates, but this may not be physiologically important. Probably plays a role in initiation of 16S rRNA degradation (leading to ribosome degradation) during starvation. The sequence is that of Ribonuclease PH from Bordetella bronchiseptica (strain ATCC BAA-588 / NCTC 13252 / RB50) (Alcaligenes bronchisepticus).